A 211-amino-acid chain; its full sequence is Protein GrpE (211 aa).

The span at 1 to 10 shows a compositional bias: basic and acidic residues; it reads MTDDTKKPGP. Disordered regions lie at residues 1 to 37 and 187 to 211; these read MTDDTKKPGPDADVAEEFVDPAQAGEEQAETAEPDPV and AKGGPKAEPSASAEPGTSSLNEKDA. Over residues 27-36 the composition is skewed to acidic residues; it reads EQAETAEPDP. A compositionally biased stretch (polar residues) spans 201–211; it reads PGTSSLNEKDA.

The protein belongs to the GrpE family. As to quaternary structure, homodimer.

It localises to the cytoplasm. Functionally, participates actively in the response to hyperosmotic and heat shock by preventing the aggregation of stress-denatured proteins, in association with DnaK and GrpE. It is the nucleotide exchange factor for DnaK and may function as a thermosensor. Unfolded proteins bind initially to DnaJ; upon interaction with the DnaJ-bound protein, DnaK hydrolyzes its bound ATP, resulting in the formation of a stable complex. GrpE releases ADP from DnaK; ATP binding to DnaK triggers the release of the substrate protein, thus completing the reaction cycle. Several rounds of ATP-dependent interactions between DnaJ, DnaK and GrpE are required for fully efficient folding. The polypeptide is Protein GrpE (Agrobacterium fabrum (strain C58 / ATCC 33970) (Agrobacterium tumefaciens (strain C58))).